Consider the following 242-residue polypeptide: MAAPTAKVSRGWSGLALGVRIAVLRLPGLTQVRWSRYGPEYQDPQIDKEYYRKPLAQLTEEETYERELRKTQVIKAAPATKTSSVFEDPVISKFTNMMMKGGNKILARSLMTQTLEAVKRKQFEKYHAASAEEQATVERNPYTIFHQALKNCEPVIGLVPILKGGHFYQVPVPLAERRRRFLAMKWMITECREKKPRRMLMPEKLSQELLEAFCNRGPVIKRKHDMHKMAEANRALAHYRWW.

Residues 1–37 (MAAPTAKVSRGWSGLALGVRIAVLRLPGLTQVRWSRY) constitute a mitochondrion transit peptide. The residue at position 228 (Lys228) is an N6-acetyllysine.

The protein belongs to the universal ribosomal protein uS7 family. Component of the mitochondrial ribosome small subunit (28S) which comprises a 12S rRNA and about 30 distinct proteins.

It localises to the mitochondrion. In Bos taurus (Bovine), this protein is Small ribosomal subunit protein uS7m (MRPS7).